We begin with the raw amino-acid sequence, 164 residues long: Crossover junction endodeoxyribonuclease RuvC (164 aa).

Catalysis depends on residues aspartate 7, glutamate 67, and aspartate 139. Residues aspartate 7, glutamate 67, and aspartate 139 each coordinate Mg(2+).

Belongs to the RuvC family. Homodimer which binds Holliday junction (HJ) DNA. The HJ becomes 2-fold symmetrical on binding to RuvC with unstacked arms; it has a different conformation from HJ DNA in complex with RuvA. In the full resolvosome a probable DNA-RuvA(4)-RuvB(12)-RuvC(2) complex forms which resolves the HJ. The cofactor is Mg(2+).

The protein resides in the cytoplasm. It catalyses the reaction Endonucleolytic cleavage at a junction such as a reciprocal single-stranded crossover between two homologous DNA duplexes (Holliday junction).. The RuvA-RuvB-RuvC complex processes Holliday junction (HJ) DNA during genetic recombination and DNA repair. Endonuclease that resolves HJ intermediates. Cleaves cruciform DNA by making single-stranded nicks across the HJ at symmetrical positions within the homologous arms, yielding a 5'-phosphate and a 3'-hydroxyl group; requires a central core of homology in the junction. The consensus cleavage sequence is 5'-(A/T)TT(C/G)-3'. Cleavage occurs on the 3'-side of the TT dinucleotide at the point of strand exchange. HJ branch migration catalyzed by RuvA-RuvB allows RuvC to scan DNA until it finds its consensus sequence, where it cleaves and resolves the cruciform DNA. The sequence is that of Crossover junction endodeoxyribonuclease RuvC from Geobacter sp. (strain M21).